We begin with the raw amino-acid sequence, 334 residues long: MSIEQLAETAQAMVASGKGIIAIDESAGTIAKRFSSVGIENIEENRRAYRELLLTTPKLSDYISGAILFDETIRQSTKAGVPFPKYMAEHGIIPGIKVDKGAYPLAGCPGELVTEGLDGLRARLEEYYKLGARFAKWRAVINIGDDIPSGMCIDANVHALARYAALCQEQGLVPMVEPEVIMDGNHDISAAYEVTEATLRSLFNALYEQNVVLEGTILKASMVIPGTDCEEQASIDEVAESTVMCLKSTVPAILPGIVFLSGGQTDAQSTAHLNAMNQFDPLPWPLSFSYGRAMQQAALKLWSQDMKGNFAKAQQVVYERAKENGLAALGKWKG.

It belongs to the class I fructose-bisphosphate aldolase family.

It catalyses the reaction beta-D-fructose 1,6-bisphosphate = D-glyceraldehyde 3-phosphate + dihydroxyacetone phosphate. It participates in carbohydrate degradation; glycolysis; D-glyceraldehyde 3-phosphate and glycerone phosphate from D-glucose: step 4/4. This Xylella fastidiosa (strain Temecula1 / ATCC 700964) protein is Probable fructose-bisphosphate aldolase class 1.